The chain runs to 156 residues: Deoxyuridine 5'-triphosphate nucleotidohydrolase (156 aa).

This sequence belongs to the dCTP deaminase family. Archaeal dUTPase subfamily. As to quaternary structure, homotrimer.

It carries out the reaction dUTP + H2O = dUMP + diphosphate + H(+). It functions in the pathway pyrimidine metabolism; dUMP biosynthesis; dUMP from dCTP (dUTP route): step 2/2. This enzyme is involved in nucleotide metabolism: it produces dUMP, the immediate precursor of thymidine nucleotides and it decreases the intracellular concentration of dUTP so that uracil cannot be incorporated into DNA. The protein is Deoxyuridine 5'-triphosphate nucleotidohydrolase of Methanocaldococcus jannaschii (strain ATCC 43067 / DSM 2661 / JAL-1 / JCM 10045 / NBRC 100440) (Methanococcus jannaschii).